We begin with the raw amino-acid sequence, 100 residues long: Nucleoid-associated protein HPG27_32 (100 aa).

It belongs to the YbaB/EbfC family. Homodimer.

It is found in the cytoplasm. It localises to the nucleoid. Binds to DNA and alters its conformation. May be involved in regulation of gene expression, nucleoid organization and DNA protection. In Helicobacter pylori (strain G27), this protein is Nucleoid-associated protein HPG27_32.